The primary structure comprises 188 residues: HTH-type transcriptional regulator QacR (188 aa).

Residues 1 to 61 (MNLKDKILGV…EILNIEESKW (61 aa)) enclose the HTH tetR-type domain. The H-T-H motif DNA-binding region spans 24–43 (TTGEIVKLSESSKGNLYYHF).

In terms of assembly, homodimer. Binds cooperatively to DNA as a pair of dimers.

Transcriptional repressor of qacA. Binds to IR1, an unusually long 28 bp operator, which is located downstream from the qacA promoter and overlaps its transcription start site. QacR is induced from its IR1 site by binding to one of many structurally dissimilar cationic lipophilic compounds, which are also substrates of QacA. In Staphylococcus aureus (strain Mu50 / ATCC 700699), this protein is HTH-type transcriptional regulator QacR (qacR).